A 511-amino-acid chain; its full sequence is Glucans biosynthesis protein G (511 aa).

An N-terminal signal peptide occupies residues 1–22 (MMKMRWLGAAIMLTLYASSSWA).

This sequence belongs to the OpgD/OpgG family.

It is found in the periplasm. The protein operates within glycan metabolism; osmoregulated periplasmic glucan (OPG) biosynthesis. Functionally, involved in the biosynthesis of osmoregulated periplasmic glucans (OPGs). In Salmonella paratyphi A (strain ATCC 9150 / SARB42), this protein is Glucans biosynthesis protein G.